A 1170-amino-acid chain; its full sequence is Glucose transport transcription regulator RGT1 (1170 aa).

A compositionally biased stretch (polar residues) spans 1 to 22; it reads MNELNTVSTNSSDSTKDGGTSN. 2 disordered regions span residues 1–47 and 77–149; these read MNEL…SRAC and SFDR…SNSV. Residues 47 to 76 constitute a DNA-binding region (zn(2)-C6 fungal-type); sequence CDQCRKKKIKCDYKDEKGVCSNCQRNGDRC. Residues 99-108 show a composition bias toward basic and acidic residues; it reads RTNEIQDHNN. Positions 113 to 138 are enriched in low complexity; it reads NTFDNSNNTLNNNTGNSGDNGINSNT. Positions 139-149 are enriched in polar residues; the sequence is VPSTPSRSNSV. 4 positions are modified to phosphoserine: S202, S205, S208, and S229. Disordered stretches follow at residues 226 to 254, 269 to 288, 293 to 323, 384 to 506, and 944 to 977; these read VQQS…SASG, APTD…IPSL, SNSL…LQQG, AQQT…HPMT, and NYRP…SAAP. Over residues 239–250 the composition is skewed to low complexity; sequence SGNANGSVTGSG. Basic and acidic residues predominate over residues 271–280; that stretch reads TDDHNGEQTR. Residues S283 and S284 each carry the phosphoserine modification. Low complexity-rich tracts occupy residues 293–302, 309–323, and 385–397; these read SNSLLLGGQP, QQSQ…LQQG, and QQTQ…QVPQ. S410 and S414 each carry phosphoserine. Positions 411 to 422 are enriched in polar residues; that stretch reads APVSVTLSTDRL. Over residues 424–444 the composition is skewed to low complexity; that stretch reads GNENNNGEINNNNGSNNSGSS. The span at 445–457 shows a compositional bias: polar residues; the sequence is KDTSQHSQESVTT. Residues 473 to 488 show a composition bias toward basic residues; that stretch reads STKKRRKSYVSKKTKP. A compositionally biased stretch (polar residues) spans 493-506; sequence SISITSKDSAHPMT. S1130 is modified (phosphoserine).

It belongs to the EDS1/RGT1 family. In terms of processing, glucose-induced phosphorylation regulates the DNA-binding activity. Hyperphosphorylation in cells growing on high levels of glucose does prevents DNA-binding and dephosphorylation restores DNA-binding ability.

The protein localises to the nucleus. The protein resides in the cytoplasm. Its function is as follows. Glucose-responsive transcription factor that regulates expression of several glucose transporter (HXT) genes in response to glucose. In the absence of glucose, it functions as a transcriptional repressor, whereas high concentrations of glucose cause it to function as a transcriptional activator. In cells growing on low levels of glucose, has a neutral role, neither repressing nor activating transcription. Binds the consensus binding site sequence 5'-CGGANNA-3', of which multiple copies are present in all HXT promoters regulated by RGT1. The sequence is that of Glucose transport transcription regulator RGT1 (RGT1) from Saccharomyces cerevisiae (strain JAY291) (Baker's yeast).